The chain runs to 111 residues: MSDAAVDTSSEITTKDLKEKKEVVEEAENGRDAPANGNAENEENGEQEADNEVDEEEEEGGEEEEEEEEGDGEEEDGDEDEEAESATGKRAAEDDEDDDVDTKKQKTDEDD.

Residue M1 is modified to N-acetylmethionine. The interval 1-111 (MSDAAVDTSS…TKKQKTDEDD (111 aa)) is disordered. S2 carries the N-acetylserine; in Prothymosin alpha, N-terminally processed modification. A Phosphoserine modification is found at S2. T8 bears the Phosphothreonine mark. S9 and S10 each carry phosphoserine. Phosphothreonine occurs at positions 13 and 14. Basic and acidic residues predominate over residues 13–31 (TTKDLKEKKEVVEEAENGR). K15 carries the post-translational modification N6-acetyllysine; alternate. K15 carries the N6-succinyllysine; alternate modification. Acidic residues predominate over residues 40–84 (ENEENGEQEADNEVDEEEEEGGEEEEEEEEGDGEEEDGDEDEEAE). Residues 101–111 (DTKKQKTDEDD) show a composition bias toward basic and acidic residues. At T102 the chain carries Phosphothreonine. K103 bears the N6-acetyllysine; alternate mark. A Glycyl lysine isopeptide (Lys-Gly) (interchain with G-Cter in SUMO2); alternate cross-link involves residue K103. T107 carries the post-translational modification Phosphothreonine.

Belongs to the pro/parathymosin family. Interacts with NUPR1; regulates apoptotic process. Covalently linked to a small RNA of about 20 nucleotides.

It localises to the nucleus. Prothymosin alpha may mediate immune function by conferring resistance to certain opportunistic infections. The polypeptide is Prothymosin alpha (PTMA) (Homo sapiens (Human)).